The primary structure comprises 343 residues: Thiamine-phosphate synthase (343 aa).

The segment at 1 to 123 is unknown; that stretch reads MQQASPTAIA…GACCKQLRYR (123 aa). The tract at residues 124–343 is thiamine-phosphate synthase; the sequence is VYALESGLLG…LLTQLSRINP (220 aa). Residues 171-175 and N203 each bind 4-amino-2-methyl-5-(diphosphooxymethyl)pyrimidine; that span reads QYRDK. Residues D204 and D223 each coordinate Mg(2+). 4-amino-2-methyl-5-(diphosphooxymethyl)pyrimidine is bound at residue S242. 268–270 serves as a coordination point for 2-[(2R,5Z)-2-carboxy-4-methylthiazol-5(2H)-ylidene]ethyl phosphate; sequence TPT. K271 contacts 4-amino-2-methyl-5-(diphosphooxymethyl)pyrimidine. A 2-[(2R,5Z)-2-carboxy-4-methylthiazol-5(2H)-ylidene]ethyl phosphate-binding site is contributed by G298.

This sequence belongs to the thiamine-phosphate synthase family. Requires Mg(2+) as cofactor.

It carries out the reaction 2-[(2R,5Z)-2-carboxy-4-methylthiazol-5(2H)-ylidene]ethyl phosphate + 4-amino-2-methyl-5-(diphosphooxymethyl)pyrimidine + 2 H(+) = thiamine phosphate + CO2 + diphosphate. It catalyses the reaction 2-(2-carboxy-4-methylthiazol-5-yl)ethyl phosphate + 4-amino-2-methyl-5-(diphosphooxymethyl)pyrimidine + 2 H(+) = thiamine phosphate + CO2 + diphosphate. The enzyme catalyses 4-methyl-5-(2-phosphooxyethyl)-thiazole + 4-amino-2-methyl-5-(diphosphooxymethyl)pyrimidine + H(+) = thiamine phosphate + diphosphate. Its pathway is cofactor biosynthesis; thiamine diphosphate biosynthesis; thiamine phosphate from 4-amino-2-methyl-5-diphosphomethylpyrimidine and 4-methyl-5-(2-phosphoethyl)-thiazole: step 1/1. Functionally, condenses 4-methyl-5-(beta-hydroxyethyl)thiazole monophosphate (THZ-P) and 2-methyl-4-amino-5-hydroxymethyl pyrimidine pyrophosphate (HMP-PP) to form thiamine monophosphate (TMP). The sequence is that of Thiamine-phosphate synthase from Synechocystis sp. (strain ATCC 27184 / PCC 6803 / Kazusa).